Reading from the N-terminus, the 190-residue chain is Ohanin (190 aa).

The first 20 residues, methionine 1 to alanine 20, serve as a signal peptide directing secretion. The region spanning serine 21 to leucine 127 is the B30.2/SPRY domain. A propeptide spanning residues arginine 128–leucine 190 is cleaved from the precursor.

In terms of tissue distribution, expressed by the venom gland.

It is found in the secreted. Functionally, neurotoxin that produces dose-dependent hypolocomotion and hyperalgesia in mice. May directly act on the central nervous system, as it is 6500-fold more potent when administered intracerebroventricularly than intraperitoneal. This is Ohanin from Ophiophagus hannah (King cobra).